A 153-amino-acid polypeptide reads, in one-letter code: Protein ripply2.2 (153 aa).

Residues 58–61 (WRPW) carry the WRPW motif; required for transcriptional repression and interaction with tle4 motif. The interval 93 to 128 (HPVRLFWPKSKLLDNTYQEAADLLRNFPVQATISLY) is ripply homology domain. The disordered stretch occupies residues 127–153 (LYNDSESDTDNEEDSSEEEQDSGFESE). The span at 131–153 (SESDTDNEEDSSEEEQDSGFESE) shows a compositional bias: acidic residues.

This sequence belongs to the ripply family. In terms of assembly, interacts with tle4 and tbx6, and mediates interaction between these proteins. In terms of tissue distribution, expressed in the presomitic mesoderm (PSM) in the anterior halves of somitomeres S-I, S-II and S-III.

It localises to the nucleus. In terms of biological role, required during somitogenesis for the formation of somite boundaries. Represses the expression of genes involved in somite segmentation by acting with the corepressor tle4 to down-regulate the transcriptional activity of tbx6. May act by regulating the activity of tle4. Represses transcription of delta2, thy1 and ripply2.2/bowline itself. This is Protein ripply2.2 (ripply2.2) from Xenopus laevis (African clawed frog).